A 412-amino-acid chain; its full sequence is Subtilisin-like protease 6 (412 aa).

The signal sequence occupies residues 1–20 (MGFITKAIPIVLAALSTVNG). Positions 21 to 127 (ARILEAGPHA…VRATTNGTNL (107 aa)) are excised as a propeptide. Residues 36 to 120 (KYIVVMKKDV…FIEPDFVVRA (85 aa)) form the Inhibitor I9 domain. Asparagine 123 and asparagine 126 each carry an N-linked (GlcNAc...) asparagine glycan. The region spanning 135-412 (SWGLARVSTR…SKLIYNGSGK (278 aa)) is the Peptidase S8 domain. Catalysis depends on charge relay system residues aspartate 167 and histidine 198. N-linked (GlcNAc...) asparagine glycans are attached at residues asparagine 252, asparagine 264, and asparagine 325. Catalysis depends on serine 358, which acts as the Charge relay system. Asparagine 408 carries N-linked (GlcNAc...) asparagine glycosylation.

Belongs to the peptidase S8 family.

Its subcellular location is the secreted. Secreted subtilisin-like serine protease with keratinolytic activity that contributes to pathogenicity. The protein is Subtilisin-like protease 6 (SUB6) of Trichophyton verrucosum (Cattle ringworm fungus).